The primary structure comprises 603 residues: Arginine--tRNA ligase (603 aa).

The short motif at Pro143–His153 is the 'HIGH' region element.

It belongs to the class-I aminoacyl-tRNA synthetase family. Monomer.

The protein resides in the cytoplasm. It carries out the reaction tRNA(Arg) + L-arginine + ATP = L-arginyl-tRNA(Arg) + AMP + diphosphate. This Prochlorococcus marinus (strain SARG / CCMP1375 / SS120) protein is Arginine--tRNA ligase.